Consider the following 570-residue polypeptide: Probable diguanylate cyclase DgcQ (570 aa).

The next 2 membrane-spanning stretches (helical) occupy residues 20-40 (FGPG…STLL) and 360-380 (IALT…WGVI). Positions 428–563 (QPFSVIQLDL…GRNRICASDA (136 aa)) constitute a GGDEF domain. Asp436 is a binding site for Mg(2+). Substrate contacts are provided by Asn444, His449, and Asp453. Glu479 contributes to the Mg(2+) binding site. Residue Glu479 is the Proton acceptor of the active site.

As to quaternary structure, homodimer. It depends on Mg(2+) as a cofactor.

It is found in the cell inner membrane. It carries out the reaction 2 GTP = 3',3'-c-di-GMP + 2 diphosphate. The protein operates within glycan metabolism; bacterial cellulose biosynthesis. Its pathway is purine metabolism; 3',5'-cyclic di-GMP biosynthesis. In terms of biological role, catalyzes the synthesis of cyclic-di-GMP (c-di-GMP) via the condensation of 2 GTP molecules. Cyclic-di-GMP is a second messenger which controls cell surface-associated traits in bacteria. Involved in the regulation of cellulose production. This chain is Probable diguanylate cyclase DgcQ, found in Salmonella choleraesuis (strain SC-B67).